Reading from the N-terminus, the 394-residue chain is Elongation factor Tu 2 (394 aa).

The tr-type G domain maps to Lys10 to Glu204. Residues Gly19 to Thr26 are G1. Gly19–Thr26 provides a ligand contact to GTP. A Mg(2+)-binding site is contributed by Thr26. Residues Gly60–Asn64 form a G2 region. Positions Asp81–Gly84 are G3. Residues Asp81 to His85 and Asn136 to Asp139 contribute to the GTP site. Residues Asn136–Asp139 form a G4 region. Positions Ser174–Leu176 are G5.

The protein belongs to the TRAFAC class translation factor GTPase superfamily. Classic translation factor GTPase family. EF-Tu/EF-1A subfamily. Monomer.

The protein localises to the cytoplasm. It carries out the reaction GTP + H2O = GDP + phosphate + H(+). Functionally, GTP hydrolase that promotes the GTP-dependent binding of aminoacyl-tRNA to the A-site of ribosomes during protein biosynthesis. In Shewanella loihica (strain ATCC BAA-1088 / PV-4), this protein is Elongation factor Tu 2.